Here is a 932-residue protein sequence, read N- to C-terminus: Leucine--tRNA ligase (932 aa).

The 'HIGH' region signature appears at proline 38–histidine 48. A 'KMSKS' region motif is present at residues lysine 630–serine 634. ATP is bound at residue lysine 633.

This sequence belongs to the class-I aminoacyl-tRNA synthetase family.

It localises to the cytoplasm. It catalyses the reaction tRNA(Leu) + L-leucine + ATP = L-leucyl-tRNA(Leu) + AMP + diphosphate. The chain is Leucine--tRNA ligase from Archaeoglobus fulgidus (strain ATCC 49558 / DSM 4304 / JCM 9628 / NBRC 100126 / VC-16).